The sequence spans 198 residues: MLVVGLTGGIGAGKSTVARMFAARGVEVFEADEVAHRLLEPGQPALKAVARAFGSDILGADGRLDRAALRRRVFAESKARKRLEGIVHPLVYAELARLVLGAAGSYCVLSVPLLLETGRRRFVDRLLVVDCPESLQIERVVRRSGLRPEEVRAIMAAQVSRSERLAAADDVIVNAADTAGLEAEVDALHRRYSLLAAA.

The DPCK domain maps to 3 to 198; the sequence is VVGLTGGIGA…HRRYSLLAAA (196 aa). 11-16 provides a ligand contact to ATP; that stretch reads GAGKST.

The protein belongs to the CoaE family.

Its subcellular location is the cytoplasm. It carries out the reaction 3'-dephospho-CoA + ATP = ADP + CoA + H(+). Its pathway is cofactor biosynthesis; coenzyme A biosynthesis; CoA from (R)-pantothenate: step 5/5. Its function is as follows. Catalyzes the phosphorylation of the 3'-hydroxyl group of dephosphocoenzyme A to form coenzyme A. This Methylococcus capsulatus (strain ATCC 33009 / NCIMB 11132 / Bath) protein is Dephospho-CoA kinase.